We begin with the raw amino-acid sequence, 419 residues long: Dimethylamine methyltransferase MtbB2 (419 aa).

A non-standard amino acid (pyrrolysine) is located at residue O308.

This sequence belongs to the dimethylamine methyltransferase family.

It catalyses the reaction Co(I)-[dimethylamine-specific corrinoid protein] + dimethylamine + H(+) = methyl-Co(III)-[dimethylamine-specific corrinoid protein] + methylamine. It participates in one-carbon metabolism; methanogenesis from dimethylamine. Catalyzes the transfer of a methyl group from dimethylamine to the corrinoid cofactor of MtbC. No evidence for expression of this protein has been found after growth under presumably inducing conditions. This Methanosarcina barkeri protein is Dimethylamine methyltransferase MtbB2.